The primary structure comprises 470 residues: UDP-N-acetylmuramate--L-alanine ligase (470 aa).

An ATP-binding site is contributed by 118-124; it reads GTHGKTT.

The protein belongs to the MurCDEF family.

It is found in the cytoplasm. The enzyme catalyses UDP-N-acetyl-alpha-D-muramate + L-alanine + ATP = UDP-N-acetyl-alpha-D-muramoyl-L-alanine + ADP + phosphate + H(+). The protein operates within cell wall biogenesis; peptidoglycan biosynthesis. Functionally, cell wall formation. The chain is UDP-N-acetylmuramate--L-alanine ligase from Cereibacter sphaeroides (strain KD131 / KCTC 12085) (Rhodobacter sphaeroides).